The chain runs to 290 residues: Inactive tau-tubulin kinase ttbk-6 (290 aa).

The region spanning 1–240 (MEDHVLKKLN…FWQVMENEKI (240 aa)) is the Protein kinase domain. 2 disordered regions span residues 244-263 (SKFDWENEEPDMSVPPAAWE) and 268-290 (RYFQSNPLEINGPPTPAEVDFVL).

The protein belongs to the protein kinase superfamily. CK1 Ser/Thr protein kinase family.

This chain is Inactive tau-tubulin kinase ttbk-6, found in Caenorhabditis elegans.